The primary structure comprises 259 residues: Virion protein US10 homolog (259 aa).

Residues C162 to C174 fold into a zinc finger.

This sequence belongs to the herpesviridae US10 family. Post-translationally, phosphorylated.

The protein resides in the virion tegument. It is found in the host nucleus matrix. This chain is Virion protein US10 homolog, found in Equine herpesvirus 4 (strain 1942) (EHV-4).